The chain runs to 174 residues: ATP-dependent protease subunit HslV (174 aa).

Thr2 is an active-site residue. Na(+) is bound by residues Gly157, Cys160, and Thr163.

The protein belongs to the peptidase T1B family. HslV subfamily. A double ring-shaped homohexamer of HslV is capped on each side by a ring-shaped HslU homohexamer. The assembly of the HslU/HslV complex is dependent on binding of ATP.

It localises to the cytoplasm. The catalysed reaction is ATP-dependent cleavage of peptide bonds with broad specificity.. Allosterically activated by HslU binding. In terms of biological role, protease subunit of a proteasome-like degradation complex believed to be a general protein degrading machinery. The polypeptide is ATP-dependent protease subunit HslV (Shewanella halifaxensis (strain HAW-EB4)).